Here is an 897-residue protein sequence, read N- to C-terminus: High molecular weight rhoptry protein 3 (897 aa).

An N-terminal signal peptide occupies residues 1–24 (MRSKHLVTLFIITFLSFSTVKVWG). Intrachain disulfides connect cysteine 157-cysteine 231, cysteine 244-cysteine 253, cysteine 262-cysteine 276, cysteine 421-cysteine 620, and cysteine 475-cysteine 536. Residues 597-615 (FVLYFISIISVLYINEYYY) form a helical membrane-spanning segment. Disordered stretches follow at residues 788–845 (KEQS…SNLK) and 859–897 (QLDK…ENEL). Residues 792–801 (KSTSAASTSD) show a composition bias toward polar residues. The span at 802–817 (ELSGSEGPSTESTSTG) shows a compositional bias: low complexity. The residue at position 804 (serine 804) is a Phosphoserine. The span at 820–832 (GEDKTTDNTYKEM) shows a compositional bias: basic and acidic residues. Residues 865–876 (PKKKKSKRKKKR) are compositionally biased toward basic residues. Basic and acidic residues predominate over residues 877–889 (DSSSDRILLEESK).

As to quaternary structure, component of the RhopH complex, composed of CLAG3.1/CLAG3.2, RhopH2 and RhopH3 with a 1:1:1 subunit stoichiometry. Interacts with CLAG3.1/CLAG3.2. Interacts with CDPK1; the interaction promotes RhopH3 phosphorylation in merozoites. In terms of processing, proteolytically cleaved near C-terminus.

The protein localises to the host cell membrane. Its subcellular location is the parasitophorous vacuole membrane. The protein resides in the cytoplasmic vesicle. It localises to the secretory vesicle. It is found in the rhoptry. Its function is as follows. Participates in the formation of new permeability pathways in Plasmodium-infected erythrocytes enabling the uptake of nutrients from the blood plasma. Required for maintaining invasion capacity of merozoites. Required for the trophozoite to schizont developmental transition of the intracellular parasite. The sequence is that of High molecular weight rhoptry protein 3 from Plasmodium falciparum.